Reading from the N-terminus, the 106-residue chain is Immunoglobulin lambda constant 6 (106 aa).

The Ig-like domain maps to 7-101 (PSVTLFPPSS…EGSTVEKTVA (95 aa)). C28 and C87 are oxidised to a cystine.

Immunoglobulins are composed of two identical heavy chains and two identical light chains; disulfide-linked.

Its subcellular location is the secreted. The protein resides in the cell membrane. Constant region of immunoglobulin light chains. Immunoglobulins, also known as antibodies, are membrane-bound or secreted glycoproteins produced by B lymphocytes. In the recognition phase of humoral immunity, the membrane-bound immunoglobulins serve as receptors which, upon binding of a specific antigen, trigger the clonal expansion and differentiation of B lymphocytes into immunoglobulins-secreting plasma cells. Secreted immunoglobulins mediate the effector phase of humoral immunity, which results in the elimination of bound antigens. The antigen binding site is formed by the variable domain of one heavy chain, together with that of its associated light chain. Thus, each immunoglobulin has two antigen binding sites with remarkable affinity for a particular antigen. The variable domains are assembled by a process called V-(D)-J rearrangement and can then be subjected to somatic hypermutations which, after exposure to antigen and selection, allow affinity maturation for a particular antigen. This chain is Immunoglobulin lambda constant 6, found in Homo sapiens (Human).